The primary structure comprises 346 residues: Propane 2-monooxygenase, reductase component (346 aa).

Residues 5-94 (HKISFEPVDI…DCEIELLNFD (90 aa)) enclose the 2Fe-2S ferredoxin-type domain. 4 residues coordinate [2Fe-2S] cluster: Cys-39, Cys-44, Cys-46, and Cys-78. An FAD-binding FR-type domain is found at 104–205 (IQDVTTKVAA…NGPYGSCTLR (102 aa)).

This sequence belongs to the bacterial ring-hydroxylating dioxygenase ferredoxin reductase family. As to quaternary structure, the propane 2-monooxygenase multicomponent enzyme system is composed of an electron transfer component and a monooxygenase component interacting with the effector protein PrmD. The electron transfer component is composed of a reductase (PrmB), and the monooxygenase component is formed by a large subunit (PrmA) and a small subunit (PrmC). The cofactor is FAD. It depends on [2Fe-2S] cluster as a cofactor.

In terms of biological role, reductase component of the propane 2-monooxygenase multicomponent enzyme system which is involved in the degradation of propane via the O2-dependent hydroxylation of propane. Reductase catalyzes the transfer of electrons from NADH or NADPH to monooxygenase. This is Propane 2-monooxygenase, reductase component from Gordonia sp. (strain TY-5).